The sequence spans 104 residues: uncharacterized protein (104 aa).

The stretch at 24–69 (VIKQIIEKYNDKVKELDTLKNQYQNLQQDYENLKQQVSLQRQTMIS) forms a coiled coil.

This is an uncharacterized protein from Acanthamoeba polyphaga mimivirus (APMV).